The chain runs to 141 residues: HTH-type transcriptional repressor NsrR (141 aa).

The region spanning 2-129 (QLTSFTDYGL…DNYTLADLVE (128 aa)) is the HTH rrf2-type domain. The segment at residues 28-51 (ISEVTEVYGVSRNHMVKIINQLSR) is a DNA-binding region (H-T-H motif). [2Fe-2S] cluster contacts are provided by Cys91, Cys96, and Cys102.

The cofactor is [2Fe-2S] cluster.

Functionally, nitric oxide-sensitive repressor of genes involved in protecting the cell against nitrosative stress. May require iron for activity. The sequence is that of HTH-type transcriptional repressor NsrR from Salmonella choleraesuis (strain SC-B67).